We begin with the raw amino-acid sequence, 118 residues long: DNA-binding protein inhibitor ID-3-A (118 aa).

The 53-residue stretch at Ser-32–Leu-84 folds into the bHLH domain.

In terms of assembly, homodimer. Heterodimer with other HLH proteins. Interacts (via HLH domain) with the bHLH protein hes4/hairy2 (via Orange domain). Interacts with stat3. In terms of tissue distribution, at gastrula stage, expressed in all three germ layers, but becomes localized to discrete domains of the developing nervous system during neurulation, including the anterior neural plate, cement gland, eye anlagen, otic placode and both cranial and trunk premigratory and early migratory neural crest cells. Also expressed in the most dorsal and ventral portions of the myotome, the developing heart and anterior blood islets, and in the tail fin mesenchyme. Expressed at a low level in limbs, with expression decreasing as limbs develop, but expressed at a high level in blastemas (regenerated limbs), where expression is localized to both the blastermal epidermis and mesenchyme. Widely expressed in adults including the liver and heart.

The protein localises to the nucleus. Its function is as follows. Transcriptional regulator (lacking a basic DNA binding domain) which negatively regulates the basic helix-loop-helix (bHLH) transcription factors by forming heterodimers and inhibiting their DNA binding and transcriptional activity. Influences cell fate decisions in the embryo by sequestering and blocking the activity of the bHLH transcription factors that control these decisions. Inhibits the binding of myogenic bHLH-containing complexes to E-box DNA, thereby preventing activation of muscle-specific target genes. Also inhibits the activity of neurogenic factor neurod1/neuroD. Plays a role in cell cycle progression and survival of neural crest progenitors; binding to either hes4-B/hairy2b or stat3 blocks the formation of transcription factor complexes and the repressor function of hes4-B/hairy2B, to allow neural crest progenitors to differentiate. May play a role in the regulation of the circadian rhythm. The sequence is that of DNA-binding protein inhibitor ID-3-A (id3-a) from Xenopus laevis (African clawed frog).